The sequence spans 415 residues: Proline-serine-threonine phosphatase-interacting protein 1 (415 aa).

Residues 5 to 264 (LQFRDAFWCR…TLEGCDVEGD (260 aa)) form the F-BAR domain. Coiled-coil stretches lie at residues 94–133 (LALA…KLSL) and 162–215 (SANG…TCEA). Serine 318 carries the post-translational modification Phosphoserine. A Phosphotyrosine; by ABL1 modification is found at tyrosine 344. Positions 358 to 415 (SSAQDYRALYDYTAQNSDELDISAGDILAVILEGEDGWWTVERNGQRGFVPGSYLEKL) constitute an SH3 domain.

In terms of assembly, homodimer. Homotrimer. Interacts (via coiled-coil domain) with CD2AP, PTPN12 and PTPN18. Interacts (via SH3 domain) with ABL1 and WAS. Interacts (via SH3 and coiled-coil domains) with MEFV (via B-box zinc finger); the interaction allows binding of MEFV to PYCARD and facilitates formation of PYCARD pyroptosomes. Interacts with DNM2 and FASLG. Interacts with CD2. Dephosphorylated on Tyr-344 by PTPN18, this event negatively regulates the association of PSTPIP1 with SH2 domain-containing proteins as tyrosine kinase. Phosphorylation of Tyr-344 is probably required for subsequent phosphorylation at other tyrosine residues. Phosphorylation is induced by activation of the EGFR and PDGFR in a ABL1 dependent manner. The phosphorylation regulates the interaction with WAS and with MEFV. In terms of tissue distribution, highly expressed in adult lung and spleen, and weakly expressed in testis, muscle, kidney, brain and heart. Highly expressed in spleen and thymus, moderately in lung, brain and muscle, and weakly expressed in heart and liver (at protein level).

It localises to the cytoplasm. Its subcellular location is the perinuclear region. The protein resides in the cell projection. It is found in the lamellipodium. The protein localises to the cleavage furrow. It localises to the cytoskeleton. Its subcellular location is the cell membrane. The protein resides in the uropodium. Functionally, involved in regulation of the actin cytoskeleton. May regulate WAS actin-bundling activity. Bridges the interaction between ABL1 and PTPN18 leading to ABL1 dephosphorylation. May play a role as a scaffold protein between PTPN12 and WAS and allow PTPN12 to dephosphorylate WAS. Has the potential to physically couple CD2 and CD2AP to WAS. Acts downstream of CD2 and CD2AP to recruit WAS to the T-cell:APC contact site so as to promote the actin polymerization required for synapse induction during T-cell activation. Down-regulates CD2-stimulated adhesion through the coupling of PTPN12 to CD2. Also has a role in innate immunity and the inflammatory response. Recruited to inflammasomes by MEFV. Induces formation of pyroptosomes, large supramolecular structures composed of oligomerized PYCARD dimers which form prior to inflammatory apoptosis. Binding to MEFV allows MEFV to bind to PYCARD and facilitates pyroptosome formation. Regulates endocytosis and cell migration in neutrophils. The polypeptide is Proline-serine-threonine phosphatase-interacting protein 1 (Pstpip1) (Mus musculus (Mouse)).